The chain runs to 95 residues: Large ribosomal subunit protein bL25 (95 aa).

This sequence belongs to the bacterial ribosomal protein bL25 family. In terms of assembly, part of the 50S ribosomal subunit; part of the 5S rRNA/L5/L18/L25 subcomplex. Contacts the 5S rRNA. Binds to the 5S rRNA independently of L5 and L18.

In terms of biological role, this is one of the proteins that binds to the 5S RNA in the ribosome where it forms part of the central protuberance. The chain is Large ribosomal subunit protein bL25 from Haemophilus influenzae (strain PittGG).